Here is a 247-residue protein sequence, read N- to C-terminus: MWVGIVSLFPEMFRSVTDFGVTGQAVKKGLLSVEAWNPRDFAHDKRRTVDDKPYGGGPGMLMMVQPLRDAIHAAKQASPGKTKVIYLSPQGRKLDQQGVEELAQNQNLILICGRYEGVDERIIESEVDEEWSIGDFVMTGGELPAMTLIDSVSRFIPGVLGDFASAEEDSFANGLLDCPHYTRPEVLDGKEVPAVLKSGNHEDIRRWRLKQSLGRTWLRRPELLENLALTDEQEQLLTEYIKETRHQ.

S-adenosyl-L-methionine-binding positions include G113 and I133–M138.

This sequence belongs to the RNA methyltransferase TrmD family. In terms of assembly, homodimer.

It is found in the cytoplasm. It carries out the reaction guanosine(37) in tRNA + S-adenosyl-L-methionine = N(1)-methylguanosine(37) in tRNA + S-adenosyl-L-homocysteine + H(+). In terms of biological role, specifically methylates guanosine-37 in various tRNAs. This chain is tRNA (guanine-N(1)-)-methyltransferase, found in Vibrio cholerae serotype O1 (strain ATCC 39541 / Classical Ogawa 395 / O395).